Consider the following 233-residue polypeptide: Large ribosomal subunit protein uL1 (233 aa).

Belongs to the universal ribosomal protein uL1 family. As to quaternary structure, part of the 50S ribosomal subunit.

In terms of biological role, binds directly to 23S rRNA. The L1 stalk is quite mobile in the ribosome, and is involved in E site tRNA release. Functionally, protein L1 is also a translational repressor protein, it controls the translation of the L11 operon by binding to its mRNA. This is Large ribosomal subunit protein uL1 from Thermotoga sp. (strain RQ2).